Reading from the N-terminus, the 314-residue chain is Ribosomal protein L11 methyltransferase (314 aa).

S-adenosyl-L-methionine contacts are provided by T166, G187, D209, and N251.

It belongs to the methyltransferase superfamily. PrmA family.

It is found in the cytoplasm. The enzyme catalyses L-lysyl-[protein] + 3 S-adenosyl-L-methionine = N(6),N(6),N(6)-trimethyl-L-lysyl-[protein] + 3 S-adenosyl-L-homocysteine + 3 H(+). In terms of biological role, methylates ribosomal protein L11. The polypeptide is Ribosomal protein L11 methyltransferase (Clostridium tetani (strain Massachusetts / E88)).